Here is a 1175-residue protein sequence, read N- to C-terminus: Topoisomerase 1-associated factor 1 (1175 aa).

Disordered regions lie at residues 894-982 (NYQS…DDEK) and 1043-1175 (SDGD…DDEE). The segment covering 910–921 (AKKRNSRKKSTK) has biased composition (basic residues). The span at 930 to 940 (GDSDDDDDDAD) shows a compositional bias: acidic residues. Positions 954–966 (PRDLLFEEPKPLR) are enriched in basic and acidic residues. Residues 1044–1053 (DGDDDDDDGN) are compositionally biased toward acidic residues. Polar residues predominate over residues 1078–1096 (ILDSVQSQVLDNGSSQGNF). Positions 1137-1156 (EEDDNADEDEDEDEDVDGEE) are enriched in acidic residues.

It belongs to the timeless family. As to quaternary structure, component of the fork protection complex (FPC) consisting of TOF1 and CSM3.

The protein resides in the nucleus. Forms a fork protection complex (FPC) with CSM3 and which is required for chromosome segregation during meiosis and DNA damage repair. FPC coordinates leading and lagging strand synthesis and moves with the replication fork. FPC stabilizes replication forks in a configuration that is recognized by replication checkpoint sensors. The sequence is that of Topoisomerase 1-associated factor 1 (TOF1) from Lodderomyces elongisporus (strain ATCC 11503 / CBS 2605 / JCM 1781 / NBRC 1676 / NRRL YB-4239) (Yeast).